A 743-amino-acid polypeptide reads, in one-letter code: 1,4-alpha-glucan branching enzyme GlgB (743 aa).

Asp-416 functions as the Nucleophile in the catalytic mechanism. The active-site Proton donor is Glu-469.

Belongs to the glycosyl hydrolase 13 family. GlgB subfamily. In terms of assembly, monomer.

The enzyme catalyses Transfers a segment of a (1-&gt;4)-alpha-D-glucan chain to a primary hydroxy group in a similar glucan chain.. It participates in glycan biosynthesis; glycogen biosynthesis. Catalyzes the formation of the alpha-1,6-glucosidic linkages in glycogen by scission of a 1,4-alpha-linked oligosaccharide from growing alpha-1,4-glucan chains and the subsequent attachment of the oligosaccharide to the alpha-1,6 position. The polypeptide is 1,4-alpha-glucan branching enzyme GlgB (Shewanella baltica (strain OS223)).